Consider the following 168-residue polypeptide: Cell division inhibitor SulA (168 aa).

Residues 1 to 20 (MSTQSVSSHNIESSSFSANQ) form a disordered region. The segment at 105-111 (ALLTGNY) is ftsZ binding. A lon protease binding region spans residues 161–168 (KIHSTLYH).

It belongs to the SulA family. In terms of assembly, interacts with FtsZ. In terms of processing, is rapidly cleaved and degraded by the Lon protease once DNA damage is repaired.

Functionally, component of the SOS system and an inhibitor of cell division. Accumulation of SulA causes rapid cessation of cell division and the appearance of long, non-septate filaments. In the presence of GTP, binds a polymerization-competent form of FtsZ in a 1:1 ratio, thus inhibiting FtsZ polymerization and therefore preventing it from participating in the assembly of the Z ring. This mechanism prevents the premature segregation of damaged DNA to daughter cells during cell division. In Pectobacterium atrosepticum (strain SCRI 1043 / ATCC BAA-672) (Erwinia carotovora subsp. atroseptica), this protein is Cell division inhibitor SulA.